A 389-amino-acid chain; its full sequence is Probable protein phosphatase 2C 12 (389 aa).

Residues 42 to 356 form the PPM-type phosphatase domain; sequence VASLFSQRGK…DDCSAVCLFL (315 aa). The Mn(2+) site is built by Asp77 and Gly78. Positions 119–145 are disordered; that stretch reads AFSDDAAASSSADSSGNSSPQPSASAS. The span at 121–145 shows a compositional bias: low complexity; the sequence is SDDAAASSSADSSGNSSPQPSASAS. Mn(2+) is bound by residues Asp301 and Asp347.

It belongs to the PP2C family. Requires Mg(2+) as cofactor. It depends on Mn(2+) as a cofactor.

The catalysed reaction is O-phospho-L-seryl-[protein] + H2O = L-seryl-[protein] + phosphate. It catalyses the reaction O-phospho-L-threonyl-[protein] + H2O = L-threonyl-[protein] + phosphate. This Oryza sativa subsp. japonica (Rice) protein is Probable protein phosphatase 2C 12.